We begin with the raw amino-acid sequence, 255 residues long: MLKIGKVESYIHEKLKEEKLHFVLLDPEDVSPRLASKLAKISEEVGVDAIMVGGSTGAEGEVLDGVVKAIKENSSLPVILFPGSHGGLSKYADAVFFMSLLNSRNPFFIAGAQALGAFRVKHYGIEPIPMAYLVVEPGETAGWVSDANLIPRHKPKIAAAYALAGQYMGMRLVYLEAGSGAPEHIPNEMIKVVKSAIDVPLIVGGGIRTYEDAKEVVQSGADIIVTGTAIEKAGSLEESKKRLESIINGVKEVSP.

Positions 26 and 55 each coordinate Mg(2+). Sn-glycerol 1-phosphate-binding positions include 174–180 (YLEAGSG), 205–206 (GG), and 227–228 (GT).

It belongs to the GGGP/HepGP synthase family. Group II subfamily. Requires Mg(2+) as cofactor.

The protein localises to the cytoplasm. The enzyme catalyses sn-glycerol 1-phosphate + (2E,6E,10E)-geranylgeranyl diphosphate = sn-3-O-(geranylgeranyl)glycerol 1-phosphate + diphosphate. It participates in membrane lipid metabolism; glycerophospholipid metabolism. Its function is as follows. Prenyltransferase that catalyzes the transfer of the geranylgeranyl moiety of geranylgeranyl diphosphate (GGPP) to the C3 hydroxyl of sn-glycerol-1-phosphate (G1P). This reaction is the first ether-bond-formation step in the biosynthesis of archaeal membrane lipids. In Thermococcus sibiricus (strain DSM 12597 / MM 739), this protein is Geranylgeranylglyceryl phosphate synthase.